We begin with the raw amino-acid sequence, 124 residues long: MHDPHGHAHTVRPPGRGRNWPGPWRKTPGRLLGTSFVRLYQLTLSGFVGNSCRHLPTCSEYAHEAIARHGLWAGGWMGFFRVLRCGPFGTHGIDLVPEVLADRYVWFMPWRYWRIGRKRAETRA.

Residues 1 to 24 are disordered; sequence MHDPHGHAHTVRPPGRGRNWPGPW. Over residues 12–24 the composition is skewed to low complexity; that stretch reads RPPGRGRNWPGPW.

Belongs to the UPF0161 family.

It localises to the cell inner membrane. Could be involved in insertion of integral membrane proteins into the membrane. The polypeptide is Putative membrane protein insertion efficiency factor (Mesorhizobium japonicum (strain LMG 29417 / CECT 9101 / MAFF 303099) (Mesorhizobium loti (strain MAFF 303099))).